Consider the following 205-residue polypeptide: Glycerol-3-phosphate acyltransferase (205 aa).

Helical transmembrane passes span 7 to 27 (MTAL…VWVC), 54 to 74 (VVPA…VLWV), 80 to 100 (LPIW…SYPL), 116 to 136 (VLLM…ALLA), 141 to 161 (TAAV…YWLA), and 163 to 183 (EATL…AWNI).

It belongs to the PlsY family. In terms of assembly, probably interacts with PlsX.

It localises to the cell inner membrane. The catalysed reaction is an acyl phosphate + sn-glycerol 3-phosphate = a 1-acyl-sn-glycero-3-phosphate + phosphate. Its pathway is lipid metabolism; phospholipid metabolism. Functionally, catalyzes the transfer of an acyl group from acyl-phosphate (acyl-PO(4)) to glycerol-3-phosphate (G3P) to form lysophosphatidic acid (LPA). This enzyme utilizes acyl-phosphate as fatty acyl donor, but not acyl-CoA or acyl-ACP. The protein is Glycerol-3-phosphate acyltransferase of Chromohalobacter salexigens (strain ATCC BAA-138 / DSM 3043 / CIP 106854 / NCIMB 13768 / 1H11).